A 301-amino-acid polypeptide reads, in one-letter code: Probable alpha-L-glutamate ligase (301 aa).

The region spanning 104–287 is the ATP-grasp domain; sequence LQLLSRKGIG…VADEIIRFIE (184 aa). ATP is bound by residues Lys-141, 178 to 179, Asp-187, and 211 to 213; these read EF and RSN. Positions 248, 260, and 262 each coordinate Mg(2+). Mn(2+)-binding residues include Asp-248, Glu-260, and Asn-262.

It belongs to the RimK family. Requires Mg(2+) as cofactor. It depends on Mn(2+) as a cofactor.

This chain is Probable alpha-L-glutamate ligase, found in Syntrophotalea carbinolica (strain DSM 2380 / NBRC 103641 / GraBd1) (Pelobacter carbinolicus).